The primary structure comprises 275 residues: 5'-nucleotidase SurE (275 aa).

Asp-14, Asp-15, Ser-46, and Asn-104 together coordinate a divalent metal cation.

Belongs to the SurE nucleotidase family. It depends on a divalent metal cation as a cofactor.

The protein resides in the cytoplasm. It catalyses the reaction a ribonucleoside 5'-phosphate + H2O = a ribonucleoside + phosphate. Its function is as follows. Nucleotidase that shows phosphatase activity on nucleoside 5'-monophosphates. This Synechocystis sp. (strain ATCC 27184 / PCC 6803 / Kazusa) protein is 5'-nucleotidase SurE.